A 451-amino-acid polypeptide reads, in one-letter code: Phosphoglucosamine mutase (451 aa).

The active-site Phosphoserine intermediate is Ser102. Residues Ser102, Asp242, Asp244, and Asp246 each coordinate Mg(2+). Ser102 carries the phosphoserine modification.

The protein belongs to the phosphohexose mutase family. Mg(2+) serves as cofactor. Post-translationally, activated by phosphorylation.

The enzyme catalyses alpha-D-glucosamine 1-phosphate = D-glucosamine 6-phosphate. Its function is as follows. Catalyzes the conversion of glucosamine-6-phosphate to glucosamine-1-phosphate. This is Phosphoglucosamine mutase from Staphylococcus carnosus (strain TM300).